The following is a 460-amino-acid chain: Glucan endo-1,3-beta-D-glucosidase (460 aa).

An N-terminal signal peptide occupies residues 1 to 26 (MAANVQTSSLLFLVFLLLQNFYSANS). The Proton donor role is filled by E123. E268 serves as the catalytic Nucleophile. The interval 352–371 (NTQNPTTPATPTPTPKAAGS) is disordered. N355 carries N-linked (GlcNAc...) asparagine glycosylation. A disulfide bridge links C373 with C435. N447 carries an N-linked (GlcNAc...) asparagine glycan.

Belongs to the glycosyl hydrolase 17 family. As to quaternary structure, homodimer. Post-translationally, glycosylated. Contains two additional disulfide bonds, but it is unclear if they are between the pairs Cys-392-Cys-398 and Cys-407-Cys-453 (PudMed:18096638) or between the pairs Cys-392-Cys-453 and Cys-398-Cys-407 (PudMed:12392450). As to expression, expressed only in pollen.

Its subcellular location is the secreted. It catalyses the reaction Hydrolysis of (1-&gt;3)-beta-D-glucosidic linkages in (1-&gt;3)-beta-D-glucans.. The sequence is that of Glucan endo-1,3-beta-D-glucosidase (OLE9) from Olea europaea (Common olive).